A 185-amino-acid chain; its full sequence is uncharacterized protein (185 aa).

5 helical membrane passes run 4–24, 54–74, 98–118, 119–139, and 153–173; these read TYLT…SLSI, LALF…LKLI, LRMG…LLQN, VIWI…FTVY, and FILL…FIFI.

It is found in the cell membrane. This is an uncharacterized protein from Bacillus subtilis (strain 168).